The chain runs to 367 residues: Diphthine methyltransferase homolog (367 aa).

4 WD repeats span residues 84-124 (NFNS…KKLE), 132-173 (SLSN…SKVT), 180-220 (AHDY…NHND), and 234-274 (RCDM…QPII).

This sequence belongs to the DPH7 family.

It carries out the reaction diphthine methyl ester-[translation elongation factor 2] + H2O = diphthine-[translation elongation factor 2] + methanol + H(+). The protein operates within protein modification; peptidyl-diphthamide biosynthesis. In terms of biological role, catalyzes the demethylation of diphthine methyl ester to form diphthine, an intermediate diphthamide biosynthesis, a post-translational modification of histidine which occurs in translation elongation factor 2 (efbA). The protein is Diphthine methyltransferase homolog (wdr85) of Dictyostelium discoideum (Social amoeba).